A 542-amino-acid polypeptide reads, in one-letter code: MNKRSLENNELNEIQNNQNKNNNNKINKEIPSDNTPLKKLKSINSLEQLQEVDEDEDLDVEIDTKLINKLDKKGRKYEFVGEGYSDEEQISDDYEDDESSEYEYGYENEDELLDDEDHLDNINEIKKIQKKLVNTETSTSITNTSSTTTTSTSTTTTTTTKTQINETILLDILNNNKDEVDDEIQRIGNNVGNSKEEEGEEEEENIELVARSFIYKHIQEKKSLGIDPIEFTKDIGFKLELEKDDDAWEIITAFLTRKKVAVNLFLNYLKYNTLARPYRKKIATLDLSTFEKVCQLFESSKNIVIITGAGVSVSCGIPDFRSKGGVYETIEKKYNLPRPESLFDIHYLRANPLPFFEFAKEIFPGNHKPSPTHSFIKLLDEKGKLLRNYTQNIDTLEHVAGIDREKLVNCHGSFSTATCITCKLTVDGTTIRDTIMKMEIPLCQQCNDGQSFMKPDIVFFGENLPDRFDQCVLKDVKDIDLLIVMGSSLQVQPVSLLPDIVDKQIPQILINRELVAQPHEFDYVYLGDCDQFVQDLLNKVKW.

Disordered regions lie at residues 1–37 (MNKRSLENNELNEIQNNQNKNNNNKINKEIPSDNTPL) and 136–160 (ETSTSITNTSSTTTTSTSTTTTTTT). The span at 8–25 (NNELNEIQNNQNKNNNNK) shows a compositional bias: low complexity. Residues 165-193 (NETILLDILNNNKDEVDDEIQRIGNNVGN) are a coiled coil. In terms of domain architecture, Deacetylase sirtuin-type spans 283-542 (ATLDLSTFEK…VQDLLNKVKW (260 aa)). Residue His-411 is the Proton acceptor of the active site. Zn(2+) is bound by residues Cys-419, Cys-422, Cys-443, and Cys-446.

The protein belongs to the sirtuin family. Zn(2+) is required as a cofactor.

It catalyses the reaction N(6)-acetyl-L-lysyl-[protein] + NAD(+) + H2O = 2''-O-acetyl-ADP-D-ribose + nicotinamide + L-lysyl-[protein]. Functionally, NAD-dependent deacetylase, which plays an important role in the regulation of transcriptional repression. This chain is NAD-dependent deacetylase sir2D (sir2D), found in Dictyostelium discoideum (Social amoeba).